The primary structure comprises 423 residues: Imidazolonepropionase (423 aa).

H78 and H80 together coordinate Fe(3+). Zn(2+)-binding residues include H78 and H80. Positions 87, 150, and 183 each coordinate 4-imidazolone-5-propanoate. Residue Y150 coordinates N-formimidoyl-L-glutamate. Fe(3+) is bound at residue H247. H247 is a binding site for Zn(2+). E250 provides a ligand contact to 4-imidazolone-5-propanoate. Residue D322 coordinates Fe(3+). D322 lines the Zn(2+) pocket. Residues N324 and G326 each coordinate N-formimidoyl-L-glutamate. S327 is a binding site for 4-imidazolone-5-propanoate.

The protein belongs to the metallo-dependent hydrolases superfamily. HutI family. Zn(2+) serves as cofactor. It depends on Fe(3+) as a cofactor.

Its subcellular location is the cytoplasm. It catalyses the reaction 4-imidazolone-5-propanoate + H2O = N-formimidoyl-L-glutamate. It functions in the pathway amino-acid degradation; L-histidine degradation into L-glutamate; N-formimidoyl-L-glutamate from L-histidine: step 3/3. Its function is as follows. Catalyzes the hydrolytic cleavage of the carbon-nitrogen bond in imidazolone-5-propanoate to yield N-formimidoyl-L-glutamate. It is the third step in the universal histidine degradation pathway. The protein is Imidazolonepropionase of Bacillus cereus (strain ZK / E33L).